The following is a 144-amino-acid chain: Maximins 4/H3 type 2 (144 aa).

The signal sequence occupies residues 1 to 18 (MNFKYIIAVSFFIASAYA). Positions 19–43 (RRNEKDVQSLSQRDVLEEESLREIR) are excised as a propeptide. Asn70 carries the post-translational modification Asparagine amide. Residues 74 to 123 (TAEDHEVMKRLEAVMRDLDSLDHPEEASERETRGFNQEEIANLFTKKEKR) constitute a propeptide that is removed on maturation. The residue at position 143 (Ile143) is an Isoleucine amide.

Belongs to the bombinin family. As to expression, expressed by the skin glands.

The protein resides in the secreted. Maximin-4 shows antibacterial activity against both Gram-positive and Gram-negative bacteria. It also shows antimicrobial activity against the fungus C.albicans, but not against A.flavus nor P.uticale. It has little hemolytic activity. It does not possess a significant cytotoxicity against tumor cell lines. It does not possess a significant anti-HIV activity. In terms of biological role, maximin-H3 shows antibacterial activity against both Gram-positive and Gram-negative bacteria. It also shows antimicrobial activity against the fungus C.albicans. Shows strong hemolytic activity. The chain is Maximins 4/H3 type 2 from Bombina maxima (Giant fire-bellied toad).